The primary structure comprises 422 residues: GTPase Obg (422 aa).

Residues 1–156 (MKFIDEVNVL…FALRLVLKVL (156 aa)) form the Obg domain. An OBG-type G domain is found at 157 to 324 (ADVGLVGKPS…LKAAIFKMLE (168 aa)). GTP contacts are provided by residues 163 to 170 (GKPSAGKS), 188 to 192 (FTTLV), 209 to 212 (DLPG), 278 to 281 (NKSD), and 305 to 307 (SAL). Mg(2+)-binding residues include serine 170 and threonine 190. The OCT domain occupies 342–420 (NITLDRDALK…IGNFEFDWSD (79 aa)).

Belongs to the TRAFAC class OBG-HflX-like GTPase superfamily. OBG GTPase family. As to quaternary structure, monomer. Mg(2+) is required as a cofactor.

It localises to the cytoplasm. In terms of biological role, an essential GTPase which binds GTP, GDP and possibly (p)ppGpp with moderate affinity, with high nucleotide exchange rates and a fairly low GTP hydrolysis rate. Plays a role in control of the cell cycle, stress response, ribosome biogenesis and in those bacteria that undergo differentiation, in morphogenesis control. The chain is GTPase Obg from Metamycoplasma arthritidis (strain 158L3-1) (Mycoplasma arthritidis).